The primary structure comprises 138 residues: Basic phospholipase A2 sistruxin B (138 aa).

Positions 1–16 (MRALWIVAVLLVGVEG) are cleaved as a signal peptide. Disulfide bonds link Cys-42–Cys-131, Cys-44–Cys-60, Cys-59–Cys-111, Cys-65–Cys-138, Cys-66–Cys-104, Cys-73–Cys-97, and Cys-91–Cys-102. The Ca(2+) site is built by Tyr-43, Gly-45, and Gly-47. His-63 is a catalytic residue. Asp-64 is a binding site for Ca(2+). Residue Asp-105 is part of the active site.

As to quaternary structure, heterodimer of an acidic subunit and a basic chain. The acidic subunit is non-toxic, without enzymatic activity and comprises 3 peptides that are cross-linked by 7 disulfide bridges. The basic subunit is toxic, has phospholipase A2 activity and is composed of a single chain. Requires Ca(2+) as cofactor. In terms of tissue distribution, expressed by the venom gland.

The protein localises to the secreted. The enzyme catalyses a 1,2-diacyl-sn-glycero-3-phosphocholine + H2O = a 1-acyl-sn-glycero-3-phosphocholine + a fatty acid + H(+). Its function is as follows. Snake venom phospholipase A2 (PLA2) that shows presynaptic neurotoxicity. PLA2 catalyzes the calcium-dependent hydrolysis of the 2-acyl groups in 3-sn-phosphoglycerides. This chain is Basic phospholipase A2 sistruxin B, found in Sistrurus tergeminus (Western massasauga).